We begin with the raw amino-acid sequence, 120 residues long: Large ribosomal subunit protein uL18 (120 aa).

This sequence belongs to the universal ribosomal protein uL18 family. Part of the 50S ribosomal subunit; part of the 5S rRNA/L5/L18/L25 subcomplex. Contacts the 5S and 23S rRNAs.

This is one of the proteins that bind and probably mediate the attachment of the 5S RNA into the large ribosomal subunit, where it forms part of the central protuberance. The chain is Large ribosomal subunit protein uL18 from Chloroflexus aggregans (strain MD-66 / DSM 9485).